The sequence spans 90 residues: Probable Fe(2+)-trafficking protein (90 aa).

Belongs to the Fe(2+)-trafficking protein family. In terms of assembly, monomer.

Its function is as follows. Could be a mediator in iron transactions between iron acquisition and iron-requiring processes, such as synthesis and/or repair of Fe-S clusters in biosynthetic enzymes. The protein is Probable Fe(2+)-trafficking protein of Edwardsiella ictaluri (strain 93-146).